Here is an 85-residue protein sequence, read N- to C-terminus: U4-theraphotoxin-Hhn1l (85 aa).

Residues 1-22 (MKVTLIAFLTCAAVLVLHTTAA) form the signal peptide. A propeptide spanning residues 23–48 (EELEAESQLMGVGMPDTELAAVDEER) is cleaved from the precursor. 3 cysteine pairs are disulfide-bonded: cysteine 52–cysteine 66, cysteine 56–cysteine 77, and cysteine 71–cysteine 82.

Belongs to the neurotoxin 12 (Hwtx-2) family. 02 (Hwtx-2) subfamily. In terms of tissue distribution, expressed by the venom gland.

The protein resides in the secreted. Its function is as follows. Postsynaptic neurotoxin. The chain is U4-theraphotoxin-Hhn1l from Cyriopagopus hainanus (Chinese bird spider).